Reading from the N-terminus, the 287-residue chain is MRIAVFMGGTSSEKEISLKSGEAVLESLQKQGYDAYGVILDERNQVSAFVDNDYDLAYLVLHGGNGENGKIQAVLDILGKKYTGSGVLASAITMDKDKTKQIAQSVGIKTPKSYRPVEEIERFPVIIKPVDEGSSKGLFLCNNKEEAEEAVKKLAKPIIEDYIIGEELTVGVLNGEALGVLKIIPQADVLYDYDSKYAKGGSVHEFPAKIENKSYKEAMKIAEKIHSEFGMKGISRSDFILSEGELYFLEVNSSPGMTKTSLIPDLATLKGYSFDDVVRITVETFLE.

The ATP-grasp domain maps to Lys98–Glu283. Pro124–Thr169 is a binding site for ATP. 3 residues coordinate Mg(2+): Asp238, Glu250, and Asn252.

This sequence belongs to the D-alanine--D-alanine ligase family. Requires Mg(2+) as cofactor. Mn(2+) serves as cofactor.

The protein localises to the cytoplasm. It carries out the reaction 2 D-alanine + ATP = D-alanyl-D-alanine + ADP + phosphate + H(+). Its pathway is cell wall biogenesis; peptidoglycan biosynthesis. Its function is as follows. Cell wall formation. The protein is D-alanine--D-alanine ligase of Fusobacterium nucleatum subsp. nucleatum (strain ATCC 25586 / DSM 15643 / BCRC 10681 / CIP 101130 / JCM 8532 / KCTC 2640 / LMG 13131 / VPI 4355).